The chain runs to 388 residues: Carbamoyl phosphate synthase small chain (388 aa).

The interval 1-194 (MAQNPLSKPT…WPEGYARQEA (194 aa)) is CPSase. L-glutamine is bound by residues serine 53, glycine 246, and glycine 248. In terms of domain architecture, Glutamine amidotransferase type-1 spans 198–387 (KVVAIDYGAK…AAAMDAQKAE (190 aa)). The active-site Nucleophile is the cysteine 276. L-glutamine-binding residues include leucine 277, glutamine 280, asparagine 318, glycine 320, and phenylalanine 321. Active-site residues include histidine 360 and glutamate 362.

Belongs to the CarA family. As to quaternary structure, composed of two chains; the small (or glutamine) chain promotes the hydrolysis of glutamine to ammonia, which is used by the large (or ammonia) chain to synthesize carbamoyl phosphate. Tetramer of heterodimers (alpha,beta)4.

The catalysed reaction is hydrogencarbonate + L-glutamine + 2 ATP + H2O = carbamoyl phosphate + L-glutamate + 2 ADP + phosphate + 2 H(+). The enzyme catalyses L-glutamine + H2O = L-glutamate + NH4(+). The protein operates within amino-acid biosynthesis; L-arginine biosynthesis; carbamoyl phosphate from bicarbonate: step 1/1. It participates in pyrimidine metabolism; UMP biosynthesis via de novo pathway; (S)-dihydroorotate from bicarbonate: step 1/3. In terms of biological role, small subunit of the glutamine-dependent carbamoyl phosphate synthetase (CPSase). CPSase catalyzes the formation of carbamoyl phosphate from the ammonia moiety of glutamine, carbonate, and phosphate donated by ATP, constituting the first step of 2 biosynthetic pathways, one leading to arginine and/or urea and the other to pyrimidine nucleotides. The small subunit (glutamine amidotransferase) binds and cleaves glutamine to supply the large subunit with the substrate ammonia. The polypeptide is Carbamoyl phosphate synthase small chain (Ruegeria pomeroyi (strain ATCC 700808 / DSM 15171 / DSS-3) (Silicibacter pomeroyi)).